Reading from the N-terminus, the 255-residue chain is Imidazole glycerol phosphate synthase subunit HisF (255 aa).

Catalysis depends on residues aspartate 11 and aspartate 130.

Belongs to the HisA/HisF family. In terms of assembly, heterodimer of HisH and HisF.

Its subcellular location is the cytoplasm. The catalysed reaction is 5-[(5-phospho-1-deoxy-D-ribulos-1-ylimino)methylamino]-1-(5-phospho-beta-D-ribosyl)imidazole-4-carboxamide + L-glutamine = D-erythro-1-(imidazol-4-yl)glycerol 3-phosphate + 5-amino-1-(5-phospho-beta-D-ribosyl)imidazole-4-carboxamide + L-glutamate + H(+). It functions in the pathway amino-acid biosynthesis; L-histidine biosynthesis; L-histidine from 5-phospho-alpha-D-ribose 1-diphosphate: step 5/9. In terms of biological role, IGPS catalyzes the conversion of PRFAR and glutamine to IGP, AICAR and glutamate. The HisF subunit catalyzes the cyclization activity that produces IGP and AICAR from PRFAR using the ammonia provided by the HisH subunit. This is Imidazole glycerol phosphate synthase subunit HisF from Synechococcus sp. (strain ATCC 27144 / PCC 6301 / SAUG 1402/1) (Anacystis nidulans).